The primary structure comprises 694 residues: Probable metal-nicotianamine transporter YSL8 (694 aa).

Helical transmembrane passes span isoleucine 38 to methionine 58, leucine 62 to methionine 82, cysteine 110 to methionine 130, leucine 154 to proline 174, isoleucine 215 to alanine 235, valine 265 to valine 285, valine 319 to leucine 339, isoleucine 393 to phenylalanine 413, valine 421 to leucine 441, glycine 467 to serine 487, methionine 506 to tryptophan 526, leucine 567 to alanine 587, phenylalanine 608 to tryptophan 628, and valine 643 to leucine 663.

The protein belongs to the YSL (TC 2.A.67.2) family. Expressed in root epidermis and exoderm.

It is found in the membrane. In terms of biological role, may be involved in the transport of nicotianamine-chelated metals. In Oryza sativa subsp. japonica (Rice), this protein is Probable metal-nicotianamine transporter YSL8 (YSL8).